The chain runs to 310 residues: Mycothiol acetyltransferase (310 aa).

2 N-acetyltransferase domains span residues threonine 5 to arginine 155 and proline 160 to alanine 309. Residue leucine 80 to valine 82 participates in acetyl-CoA binding. 1D-myo-inositol 2-(L-cysteinylamino)-2-deoxy-alpha-D-glucopyranoside-binding residues include aspartate 187, lysine 226, and glutamate 238. Acetyl-CoA is bound at residue isoleucine 242 to threonine 244. A 1D-myo-inositol 2-(L-cysteinylamino)-2-deoxy-alpha-D-glucopyranoside-binding site is contributed by tyrosine 276. Asparagine 281–arginine 286 contributes to the acetyl-CoA binding site.

This sequence belongs to the acetyltransferase family. MshD subfamily. In terms of assembly, monomer.

It catalyses the reaction 1D-myo-inositol 2-(L-cysteinylamino)-2-deoxy-alpha-D-glucopyranoside + acetyl-CoA = mycothiol + CoA + H(+). Its function is as follows. Catalyzes the transfer of acetyl from acetyl-CoA to desacetylmycothiol (Cys-GlcN-Ins) to form mycothiol. This is Mycothiol acetyltransferase from Acidimicrobium ferrooxidans (strain DSM 10331 / JCM 15462 / NBRC 103882 / ICP).